The chain runs to 318 residues: Pantothenate kinase (318 aa).

ATP is bound at residue 96 to 103 (GSVAVGKS).

It belongs to the prokaryotic pantothenate kinase family.

The protein resides in the cytoplasm. The catalysed reaction is (R)-pantothenate + ATP = (R)-4'-phosphopantothenate + ADP + H(+). It participates in cofactor biosynthesis; coenzyme A biosynthesis; CoA from (R)-pantothenate: step 1/5. The chain is Pantothenate kinase from Nitrobacter hamburgensis (strain DSM 10229 / NCIMB 13809 / X14).